The following is a 303-amino-acid chain: Coenzyme PQQ synthesis protein B (303 aa).

This sequence belongs to the PqqB family.

It functions in the pathway cofactor biosynthesis; pyrroloquinoline quinone biosynthesis. Functionally, may be involved in the transport of PQQ or its precursor to the periplasm. The protein is Coenzyme PQQ synthesis protein B of Pseudomonas syringae pv. syringae (strain B728a).